The chain runs to 177 residues: O-acetyl-ADP-ribose deacetylase (177 aa).

The region spanning Met-1–Gly-175 is the Macro domain. Substrate-binding positions include Asp-11–Ile-12, Asn-25, Gly-33–Asp-35, and Ser-122–Tyr-126. Asp-35 functions as the Proton acceptor in the catalytic mechanism.

It belongs to the MacroD-type family. YmdB subfamily. Homodimer. Interacts with RNase III.

It catalyses the reaction 3''-O-acetyl-ADP-D-ribose + H2O = ADP-D-ribose + acetate + H(+). It carries out the reaction 2''-O-acetyl-ADP-D-ribose + H2O = ADP-D-ribose + acetate + H(+). Deacetylates O-acetyl-ADP ribose to yield ADP-ribose and free acetate. Down-regulates ribonuclease 3 (RNase III) activity. Acts by interacting directly with the region of the ribonuclease that is required for dimerization/activation. The sequence is that of O-acetyl-ADP-ribose deacetylase from Shigella flexneri serotype 5b (strain 8401).